Reading from the N-terminus, the 203-residue chain is Thymidylate kinase (203 aa).

Residue 10-17 (GMDGAGKS) participates in ATP binding.

The protein belongs to the thymidylate kinase family.

It carries out the reaction dTMP + ATP = dTDP + ADP. Functionally, phosphorylation of dTMP to form dTDP in both de novo and salvage pathways of dTTP synthesis. The polypeptide is Thymidylate kinase (Methylobacillus flagellatus (strain ATCC 51484 / DSM 6875 / VKM B-1610 / KT)).